The following is a 142-amino-acid chain: Large ribosomal subunit protein uL13 (142 aa).

It belongs to the universal ribosomal protein uL13 family. As to quaternary structure, part of the 50S ribosomal subunit.

This protein is one of the early assembly proteins of the 50S ribosomal subunit, although it is not seen to bind rRNA by itself. It is important during the early stages of 50S assembly. The protein is Large ribosomal subunit protein uL13 of Psychrobacter sp. (strain PRwf-1).